We begin with the raw amino-acid sequence, 317 residues long: HTH-type transcriptional regulator CfxR (317 aa).

The HTH lysR-type domain occupies 8-65; the sequence is LTLRQLQIFVTVARHASFVRAAEELHLTQPAVSMQVKQLESVVGMALFERVKGQLTLT. Residues 25 to 44 constitute a DNA-binding region (H-T-H motif); sequence FVRAAEELHLTQPAVSMQVK.

This sequence belongs to the LysR transcriptional regulatory family.

In terms of biological role, trans-acting transcriptional regulator of RuBisCO genes (cfxLS) expression. This chain is HTH-type transcriptional regulator CfxR (cfxR), found in Cupriavidus necator (strain ATCC 17699 / DSM 428 / KCTC 22496 / NCIMB 10442 / H16 / Stanier 337) (Ralstonia eutropha).